Reading from the N-terminus, the 78-residue chain is Small ribosomal subunit protein bS16c (78 aa).

The protein belongs to the bacterial ribosomal protein bS16 family.

It localises to the plastid. The protein resides in the chloroplast. The sequence is that of Small ribosomal subunit protein bS16c from Adiantum capillus-veneris (Maidenhair fern).